We begin with the raw amino-acid sequence, 468 residues long: 3-isopropylmalate dehydratase large subunit (468 aa).

[4Fe-4S] cluster contacts are provided by Cys347, Cys407, and Cys410.

It belongs to the aconitase/IPM isomerase family. LeuC type 1 subfamily. Heterodimer of LeuC and LeuD. [4Fe-4S] cluster is required as a cofactor.

The enzyme catalyses (2R,3S)-3-isopropylmalate = (2S)-2-isopropylmalate. The protein operates within amino-acid biosynthesis; L-leucine biosynthesis; L-leucine from 3-methyl-2-oxobutanoate: step 2/4. Catalyzes the isomerization between 2-isopropylmalate and 3-isopropylmalate, via the formation of 2-isopropylmaleate. This Synechocystis sp. (strain ATCC 27184 / PCC 6803 / Kazusa) protein is 3-isopropylmalate dehydratase large subunit.